Consider the following 174-residue polypeptide: Peptide methionine sulfoxide reductase MsrA (174 aa).

Cys10 is a catalytic residue.

Belongs to the MsrA Met sulfoxide reductase family.

It catalyses the reaction L-methionyl-[protein] + [thioredoxin]-disulfide + H2O = L-methionyl-(S)-S-oxide-[protein] + [thioredoxin]-dithiol. The catalysed reaction is [thioredoxin]-disulfide + L-methionine + H2O = L-methionine (S)-S-oxide + [thioredoxin]-dithiol. Functionally, has an important function as a repair enzyme for proteins that have been inactivated by oxidation. Catalyzes the reversible oxidation-reduction of methionine sulfoxide in proteins to methionine. The protein is Peptide methionine sulfoxide reductase MsrA of Pseudarthrobacter chlorophenolicus (strain ATCC 700700 / DSM 12829 / CIP 107037 / JCM 12360 / KCTC 9906 / NCIMB 13794 / A6) (Arthrobacter chlorophenolicus).